The chain runs to 244 residues: Leucyl/phenylalanyl-tRNA--protein transferase (244 aa).

A disordered region spans residues 1–22 (MHSQPYLLSPAPNNTPFPPAEH).

It belongs to the L/F-transferase family.

Its subcellular location is the cytoplasm. The enzyme catalyses N-terminal L-lysyl-[protein] + L-leucyl-tRNA(Leu) = N-terminal L-leucyl-L-lysyl-[protein] + tRNA(Leu) + H(+). The catalysed reaction is N-terminal L-arginyl-[protein] + L-leucyl-tRNA(Leu) = N-terminal L-leucyl-L-arginyl-[protein] + tRNA(Leu) + H(+). It catalyses the reaction L-phenylalanyl-tRNA(Phe) + an N-terminal L-alpha-aminoacyl-[protein] = an N-terminal L-phenylalanyl-L-alpha-aminoacyl-[protein] + tRNA(Phe). Its function is as follows. Functions in the N-end rule pathway of protein degradation where it conjugates Leu, Phe and, less efficiently, Met from aminoacyl-tRNAs to the N-termini of proteins containing an N-terminal arginine or lysine. The sequence is that of Leucyl/phenylalanyl-tRNA--protein transferase from Xylella fastidiosa (strain M12).